The following is a 53-amino-acid chain: Alpha-1-antiproteinase 1 (53 aa).

A disordered region spans residues 1–28; the sequence is EDLQGDAVPETSATKDDNEXPEMIPMSL.

Belongs to the serpin family. N-glycosylated; contains biantennary glycans. As to expression, plasma.

Its subcellular location is the secreted. The protein is Alpha-1-antiproteinase 1 of Equus caballus (Horse).